We begin with the raw amino-acid sequence, 634 residues long: Chaperone protein DnaK (634 aa).

Threonine 197 is subject to Phosphothreonine; by autocatalysis. The interval 592 to 634 is disordered; the sequence is IGSSVYQQPGNQPPAPGGPNANASDDKGPDDDVIDADFTETKD. Residues 619–634 show a composition bias toward acidic residues; sequence GPDDDVIDADFTETKD.

This sequence belongs to the heat shock protein 70 family.

Functionally, acts as a chaperone. The chain is Chaperone protein DnaK from Prochlorococcus marinus (strain MIT 9515).